Consider the following 2669-residue polypeptide: Nucleosome-remodeling factor subunit NURF301 (2669 aa).

A compositionally biased stretch (basic residues) spans 1-12 (MSGRGSRKRGRP). The interval 1–121 (MSGRGSRKRG…EEDKSDNEDD (121 aa)) is required for function in nucleosome sliding. The interval 1 to 125 (MSGRGSRKRG…SDNEDDMLLT (125 aa)) is disordered. The segment at residues 6–18 (SRKRGRPPKTPNE) is a DNA-binding region (a.T hook). Positions 38 to 56 (GKSQPSTPSASRGISPQSD) are enriched in polar residues. Phosphoserine occurs at positions 40, 52, 55, 59, and 62. Over residues 66-82 (HTNRSRGSAAKRGRGRK) the composition is skewed to basic residues. A compositionally biased stretch (acidic residues) spans 109-125 (GDSEEDKSDNEDDMLLT). The DDT domain maps to 188-248 (NTHVLRALSI…LKAILREEDA (61 aa)). The PHD-type 1 zinc finger occupies 339–386 (DDHCRVCHRLGDLLCCETCPAVYHLECVDPPMNDVPTEDWQCGLCRSH). A coiled-coil region spans residues 460–515 (RLHSQITERRDEIERQMKLTETLTNEHKHTKRSVIEIEQEAKNELLEKEVLDEDEK). Positions 505 to 538 (LEKEVLDEDEKDGDAKSESQSIEGTKKQEECKMV) are disordered. Positions 528 to 537 (GTKKQEECKM) are enriched in basic and acidic residues. Residues 688-720 (LQRITSAEREERKKLEKREKRERDDEEERNRLA) are a coiled coil. Disordered stretches follow at residues 1026-1048 (EGKR…AESE), 1135-1159 (TGLN…NQKS), and 1406-1425 (RSGL…EPQI). Position 1417 is a phosphoserine (Ser-1417). Phosphothreonine is present on Thr-1527. A compositionally biased stretch (low complexity) spans 1559–1590 (SRTGGANTAAAAASPTVGGSTSTQSNPSTSTP). Disordered stretches follow at residues 1559–1596 (SRTG…VQII), 2181–2203 (INNG…ITTN), and 2283–2307 (TNEW…QTDD). Residues 2283–2293 (TNEWETCSRGS) show a composition bias toward polar residues. Residues 2338–2373 (KNDEVAELGEQKQSQLERHKELLKKNILRKRSLLER) adopt a coiled-coil conformation. The segment at 2382–2432 (DVKTKVQRHVRPLSNASPDEQSENERSGEPNLDFKRTEVQNPRHGAGRPKK) is disordered. 3 positions are modified to phosphoserine: Ser-2395, Ser-2398, and Ser-2403. The segment covering 2404–2419 (ENERSGEPNLDFKRTE) has biased composition (basic and acidic residues). The PHD-type 2 zinc-finger motif lies at 2481-2546 (EFICIDCKRA…EYVCPECQRK (66 aa)). In terms of domain architecture, Bromo spans 2556–2660 (KLTSNDVEEL…SYFVQKIKNF (105 aa)).

This sequence belongs to the BPTF family. In terms of assembly, component of the NURF complex composed of Caf1-55, E(bx), Nurf-38 and Iswi. Interacts with Trl. Interacts with histone H3-K4Me3.

The protein resides in the nucleus. Functionally, histone-binding component of NURF (nucleosome remodeling factor), a complex which catalyzes ATP-dependent nucleosome sliding and facilitates transcription of chromatin. Specifically recognizes H3 tails trimethylated on 'Lys-4' (H3K4me3), which mark transcription start sites of virtually all active genes. Required for homeotic gene expression, proper larval blood cell development, normal male X chromosome morphology, ecdysteroid signaling and metamorphosis. In Drosophila melanogaster (Fruit fly), this protein is Nucleosome-remodeling factor subunit NURF301 (E(bx)).